The chain runs to 225 residues: Vacuolar protein sorting-associated protein 2 homolog 1 (225 aa).

The stretch at 13-54 (AELLRENKRMLDKSIREIERERQGLQTQEKKLINEIKKTAKQ) forms a coiled coil.

This sequence belongs to the SNF7 family. As to quaternary structure, component of the endosomal sorting required for transport complex III (ESCRT-III), composed at least of VPS2, VPS20, VPS24 and VPS32. Interacts with SKD1.

It localises to the endosome. Functionally, component of the ESCRT-III complex, which is required for multivesicular bodies (MVBs) formation and sorting of endosomal cargo proteins into MVBs. The ESCRT-III complex is probably involved in the concentration of MVB cargo. The chain is Vacuolar protein sorting-associated protein 2 homolog 1 (VPS2.1) from Arabidopsis thaliana (Mouse-ear cress).